A 290-amino-acid polypeptide reads, in one-letter code: ATP synthase gamma chain (290 aa).

Belongs to the ATPase gamma chain family. As to quaternary structure, F-type ATPases have 2 components, CF(1) - the catalytic core - and CF(0) - the membrane proton channel. CF(1) has five subunits: alpha(3), beta(3), gamma(1), delta(1), epsilon(1). CF(0) has three main subunits: a, b and c.

It is found in the cell inner membrane. In terms of biological role, produces ATP from ADP in the presence of a proton gradient across the membrane. The gamma chain is believed to be important in regulating ATPase activity and the flow of protons through the CF(0) complex. The sequence is that of ATP synthase gamma chain from Desulfotalea psychrophila (strain LSv54 / DSM 12343).